A 906-amino-acid chain; its full sequence is NACHT, LRR and PYD domains-containing protein 1b allele 4 (906 aa).

Positions 1-22 are disordered; it reads MEESPPKQKSNTKVAQHEGQQD. Residues 126–435 form the NACHT domain; it reads QLVIIEGAAG…EFFAAISCIL (310 aa). 132–139 is a binding site for ATP; the sequence is GAAGIGKS. LRR repeat units follow at residues 627–647 and 684–704; these read NLEG…QSLC and SLTE…RMLC. One can recognise an FIIND (incomplete) domain in the interval 789-906; it reads FWGPTGPVAT…FQEHGSRNAR (118 aa).

Belongs to the NLRP family. Expressed in macrophages.

Its subcellular location is the cytoplasm. The protein resides in the cytosol. In terms of biological role, probable inactive allele of Nlrp1b, which lacks a CARD domain, suggesting that it is not able to form an inflammasome. Contrary to Nlrp1b allele 1, allele 4 is not activated by B.anthracis lethal toxin and no other activation signal is reported. In Mus musculus (Mouse), this protein is NACHT, LRR and PYD domains-containing protein 1b allele 4.